Reading from the N-terminus, the 157-residue chain is Transcriptional repressor NrdR (157 aa).

Residues 3–34 (CPFCRHPDSRVVDSRTSDDGLSIRRRRQCPEC) fold into a zinc finger. In terms of domain architecture, ATP-cone spans 46 to 136 (LSVIKRNGVV…VYQGFDSLDD (91 aa)).

The protein belongs to the NrdR family. It depends on Zn(2+) as a cofactor.

Its function is as follows. Negatively regulates transcription of bacterial ribonucleotide reductase nrd genes and operons by binding to NrdR-boxes. This chain is Transcriptional repressor NrdR, found in Clavibacter michiganensis subsp. michiganensis (strain NCPPB 382).